The primary structure comprises 40 residues: Auxin-responsive endogenous peptide 1 (40 aa).

Residues 7–29 (LIYRLVVRCFLDYSICAPFYFYH) form a helical membrane-spanning segment.

As to expression, expressed in cotyledons, hypocotyls, roots, newly developing leaves and shoot apical meristem. Not detected in flowers, siliques or mature leaves.

The protein localises to the cytoplasm. The protein resides in the nucleus. It localises to the membrane. Functionally, negative regulator of the auxin response. This chain is Auxin-responsive endogenous peptide 1, found in Arabidopsis thaliana (Mouse-ear cress).